The following is a 235-amino-acid chain: Leucyl/phenylalanyl-tRNA--protein transferase (235 aa).

This sequence belongs to the L/F-transferase family.

It localises to the cytoplasm. The catalysed reaction is N-terminal L-lysyl-[protein] + L-leucyl-tRNA(Leu) = N-terminal L-leucyl-L-lysyl-[protein] + tRNA(Leu) + H(+). It catalyses the reaction N-terminal L-arginyl-[protein] + L-leucyl-tRNA(Leu) = N-terminal L-leucyl-L-arginyl-[protein] + tRNA(Leu) + H(+). It carries out the reaction L-phenylalanyl-tRNA(Phe) + an N-terminal L-alpha-aminoacyl-[protein] = an N-terminal L-phenylalanyl-L-alpha-aminoacyl-[protein] + tRNA(Phe). Functionally, functions in the N-end rule pathway of protein degradation where it conjugates Leu, Phe and, less efficiently, Met from aminoacyl-tRNAs to the N-termini of proteins containing an N-terminal arginine or lysine. This Shewanella frigidimarina (strain NCIMB 400) protein is Leucyl/phenylalanyl-tRNA--protein transferase.